Consider the following 143-residue polypeptide: Transcriptional regulator SlyA (143 aa).

Residues 2-135 enclose the HTH marR-type domain; that stretch reads ESTLGSDLAR…LANLIERLEQ (134 aa). The H-T-H motif DNA-binding region spans 49–72; sequence QIQLAKAIGIEQPSLVRTLDQLED.

Belongs to the SlyA family. As to quaternary structure, homodimer.

In terms of biological role, transcription regulator that can specifically activate or repress expression of target genes. This Edwardsiella ictaluri (strain 93-146) protein is Transcriptional regulator SlyA.